The sequence spans 243 residues: uncharacterized protein (243 aa).

This sequence belongs to the mycobacterial PPE family.

Its subcellular location is the cell membrane. This is an uncharacterized protein from Mycobacterium tuberculosis (strain CDC 1551 / Oshkosh).